Reading from the N-terminus, the 282-residue chain is Aldo-keto reductase MUL_1987 (282 aa).

Catalysis depends on Tyr57, which acts as the Proton donor. Residues Leu197, Ile235, Ser238, Thr246, Asn247, and Arg273 each coordinate NADPH.

It belongs to the aldo/keto reductase family.

The chain is Aldo-keto reductase MUL_1987 from Mycobacterium ulcerans (strain Agy99).